A 390-amino-acid polypeptide reads, in one-letter code: Altered inheritance of mitochondria protein 6 (390 aa).

Residues Met1–Gly26 form the signal peptide.

Belongs to the AIM6 family.

The sequence is that of Altered inheritance of mitochondria protein 6 (AIM6) from Saccharomyces cerevisiae (strain RM11-1a) (Baker's yeast).